The sequence spans 214 residues: Octanoyltransferase (214 aa).

In terms of domain architecture, BPL/LPL catalytic spans 34-214; it reads GVQKELVWLL…KFNEIFSNFN (181 aa). Substrate is bound by residues 73-80, 145-147, and 158-160; these read RGGKYTYH, AFG, and GVS. The Acyl-thioester intermediate role is filled by Cys176.

The protein belongs to the LipB family.

The protein resides in the cytoplasm. The catalysed reaction is octanoyl-[ACP] + L-lysyl-[protein] = N(6)-octanoyl-L-lysyl-[protein] + holo-[ACP] + H(+). The protein operates within protein modification; protein lipoylation via endogenous pathway; protein N(6)-(lipoyl)lysine from octanoyl-[acyl-carrier-protein]: step 1/2. Catalyzes the transfer of endogenously produced octanoic acid from octanoyl-acyl-carrier-protein onto the lipoyl domains of lipoate-dependent enzymes. Lipoyl-ACP can also act as a substrate although octanoyl-ACP is likely to be the physiological substrate. This chain is Octanoyltransferase, found in Ehrlichia chaffeensis (strain ATCC CRL-10679 / Arkansas).